Reading from the N-terminus, the 252-residue chain is 3-dehydroquinate dehydratase (252 aa).

3-dehydroquinate-binding positions include S21, 46–48 (EWR), and R82. Residue H143 is the Proton donor/acceptor of the active site. K170 functions as the Schiff-base intermediate with substrate in the catalytic mechanism. 3-dehydroquinate-binding residues include R213, S232, and Q236.

Belongs to the type-I 3-dehydroquinase family. Homodimer.

It catalyses the reaction 3-dehydroquinate = 3-dehydroshikimate + H2O. The protein operates within metabolic intermediate biosynthesis; chorismate biosynthesis; chorismate from D-erythrose 4-phosphate and phosphoenolpyruvate: step 3/7. Functionally, involved in the third step of the chorismate pathway, which leads to the biosynthesis of aromatic amino acids. Catalyzes the cis-dehydration of 3-dehydroquinate (DHQ) and introduces the first double bond of the aromatic ring to yield 3-dehydroshikimate. This is 3-dehydroquinate dehydratase from Shigella dysenteriae serotype 1 (strain Sd197).